Here is a 429-residue protein sequence, read N- to C-terminus: Enolase (429 aa).

Q163 is a (2R)-2-phosphoglycerate binding site. The active-site Proton donor is the E205. The Mg(2+) site is built by D242, E287, and D314. (2R)-2-phosphoglycerate is bound by residues K339, R368, S369, and K390. Catalysis depends on K339, which acts as the Proton acceptor.

The protein belongs to the enolase family. It depends on Mg(2+) as a cofactor.

It is found in the cytoplasm. The protein resides in the secreted. The protein localises to the cell surface. The catalysed reaction is (2R)-2-phosphoglycerate = phosphoenolpyruvate + H2O. Its pathway is carbohydrate degradation; glycolysis; pyruvate from D-glyceraldehyde 3-phosphate: step 4/5. In terms of biological role, catalyzes the reversible conversion of 2-phosphoglycerate (2-PG) into phosphoenolpyruvate (PEP). It is essential for the degradation of carbohydrates via glycolysis. The chain is Enolase from Anaeromyxobacter dehalogenans (strain 2CP-1 / ATCC BAA-258).